The chain runs to 1391 residues: DNA-directed RNA polymerase subunit beta' (1391 aa).

Cys70, Cys72, Cys85, and Cys88 together coordinate Zn(2+). The Mg(2+) site is built by Asp461, Asp463, and Asp465. Cys809, Cys882, Cys889, and Cys892 together coordinate Zn(2+).

The protein belongs to the RNA polymerase beta' chain family. As to quaternary structure, the RNAP catalytic core consists of 2 alpha, 1 beta, 1 beta' and 1 omega subunit. When a sigma factor is associated with the core the holoenzyme is formed, which can initiate transcription. Mg(2+) is required as a cofactor. Zn(2+) serves as cofactor.

The catalysed reaction is RNA(n) + a ribonucleoside 5'-triphosphate = RNA(n+1) + diphosphate. Functionally, DNA-dependent RNA polymerase catalyzes the transcription of DNA into RNA using the four ribonucleoside triphosphates as substrates. In Zymomonas mobilis subsp. mobilis (strain ATCC 31821 / ZM4 / CP4), this protein is DNA-directed RNA polymerase subunit beta'.